The following is a 356-amino-acid chain: DNA polymerase IV (356 aa).

One can recognise a UmuC domain in the interval 4–185 (IIHIDMDCYY…LALGKIPGVG (182 aa)). Mg(2+)-binding residues include D8 and D103. The active site involves E104.

This sequence belongs to the DNA polymerase type-Y family. Monomer. The cofactor is Mg(2+).

It localises to the cytoplasm. It carries out the reaction DNA(n) + a 2'-deoxyribonucleoside 5'-triphosphate = DNA(n+1) + diphosphate. Poorly processive, error-prone DNA polymerase involved in untargeted mutagenesis. Copies undamaged DNA at stalled replication forks, which arise in vivo from mismatched or misaligned primer ends. These misaligned primers can be extended by PolIV. Exhibits no 3'-5' exonuclease (proofreading) activity. May be involved in translesional synthesis, in conjunction with the beta clamp from PolIII. In Pseudoalteromonas atlantica (strain T6c / ATCC BAA-1087), this protein is DNA polymerase IV.